The sequence spans 490 residues: Colicin-10 (490 aa).

The segment covering 1–20 (MDKVTDNSPDVESTESTEGS) has biased composition (polar residues). 2 disordered regions span residues 1 to 29 (MDKV…VDTG) and 146 to 171 (QKAR…EIAR). A compositionally biased stretch (basic and acidic residues) spans 146-170 (QKAREEAEAAEKALREAERQRDEIA). Residues 447–467 (IVALMFSFIVGAPLGFWGIAI) form a helical membrane-spanning segment.

This sequence belongs to the channel forming colicin family.

The protein resides in the host membrane. Functionally, this colicin is a channel-forming colicin. This class of transmembrane toxins depolarize the cytoplasmic membrane, leading to dissipation of cellular energy. Colicins are polypeptide toxins produced by and active against E.coli and closely related bacteria. This Escherichia coli protein is Colicin-10 (cta).